The following is a 158-amino-acid chain: GTP-dependent dephospho-CoA kinase (158 aa).

The GTP site is built by Asp35, Val36, Asp54, Lys56, Glu109, and Asp132.

It belongs to the GTP-dependent DPCK family.

It catalyses the reaction 3'-dephospho-CoA + GTP = GDP + CoA + H(+). Its pathway is cofactor biosynthesis; coenzyme A biosynthesis. Its function is as follows. Catalyzes the GTP-dependent phosphorylation of the 3'-hydroxyl group of dephosphocoenzyme A to form coenzyme A (CoA). The sequence is that of GTP-dependent dephospho-CoA kinase from Methanococcus maripaludis (strain DSM 14266 / JCM 13030 / NBRC 101832 / S2 / LL).